The primary structure comprises 166 residues: Mitochondrial inner membrane protease subunit 1 (166 aa).

Residues Ser-40 and Lys-83 contribute to the active site.

The protein belongs to the peptidase S26 family. IMP1 subfamily. In terms of assembly, heterodimer of 2 subunits, IMMPL1 and IMMPL2.

It is found in the mitochondrion inner membrane. Its function is as follows. Catalyzes the removal of transit peptides required for the targeting of proteins from the mitochondrial matrix, across the inner membrane, into the inter-membrane space. Known to process the nuclear encoded protein DIABLO. The sequence is that of Mitochondrial inner membrane protease subunit 1 (Immp1l) from Mus musculus (Mouse).